The primary structure comprises 468 residues: Hydroxymethylglutaryl-CoA lyase, mitochondrial (468 aa).

Residues Val-168–Ile-435 form the Pyruvate carboxyltransferase domain. Residue Arg-176 coordinates substrate. A divalent metal cation is bound by residues Asp-177, His-368, and His-370. Cys-401 is a catalytic residue. An a divalent metal cation-binding site is contributed by Asn-410.

Belongs to the HMG-CoA lyase family. In terms of assembly, homodimer. It depends on a divalent metal cation as a cofactor.

It is found in the mitochondrion matrix. The enzyme catalyses (3S)-3-hydroxy-3-methylglutaryl-CoA = acetoacetate + acetyl-CoA. It functions in the pathway metabolic intermediate metabolism; (S)-3-hydroxy-3-methylglutaryl-CoA degradation; acetoacetate from (S)-3-hydroxy-3-methylglutaryl-CoA: step 1/1. Functionally, involved in the catabolism of branched amino acids such as leucine. The protein is Hydroxymethylglutaryl-CoA lyase, mitochondrial (HMGCL) of Arabidopsis thaliana (Mouse-ear cress).